The following is a 316-amino-acid chain: Melanocyte-stimulating hormone receptor (316 aa).

Over 1–37 the chain is Extracellular; sequence MPMQGAQRKLLGSLNSTPTATSNLGLAANHTGAPCLE. N-linked (GlcNAc...) asparagine glycosylation is present at Asn-29. A helical transmembrane segment spans residues 38–63; sequence VSIPDGLFLSLGLVSLVENVLVVAAI. Over 64 to 72 the chain is Cytoplasmic; it reads AKNRNLHSS. A helical membrane pass occupies residues 73–93; the sequence is MYCFICCLALSDLLVSGSNML. Over 94–118 the chain is Extracellular; that stretch reads ETAVILLLETGALATRTSVVQQLHN. The chain crosses the membrane as a helical span at residues 119 to 140; the sequence is TINVLTCSSMLCSLCFLGAIAV. Over 141–163 the chain is Cytoplasmic; it reads DRYISIFYALRYHSIMTLPRAQR. A helical transmembrane segment spans residues 164-183; sequence AIAAIWVASVLSSTLFITYY. At 184 to 191 the chain is on the extracellular side; it reads DHAAVLLC. The chain crosses the membrane as a helical span at residues 192–211; it reads LVVFFLAMLVLMAVLYVHML. Residues 212–240 are Cytoplasmic-facing; the sequence is ARACQHAHGIIRLHKRQTPAHQAFGLRGA. The helical transmembrane segment at 241-266 threads the bilayer; that stretch reads ATLTILLGIFFLCWGPFFLHLTLVVF. At 267 to 279 the chain is on the extracellular side; the sequence is CPQHLTCSCIFKN. Residues 280-300 traverse the membrane as a helical segment; the sequence is FKVFLTLIICNTIIDPLIYAF. Topologically, residues 301–316 are cytoplasmic; that stretch reads RSQELRRTLKEVLCSW. The S-palmitoyl cysteine moiety is linked to residue Cys-314.

Belongs to the G-protein coupled receptor 1 family. In terms of assembly, interacts with MGRN1, but does not undergo MGRN1-mediated ubiquitination; this interaction competes with GNAS-binding and thus inhibits agonist-induced cAMP production. Interacts with OPN3; the interaction results in a decrease in MC1R-mediated cAMP signaling and ultimately a decrease in melanin production in melanocytes.

It localises to the cell membrane. In terms of biological role, receptor for MSH (alpha, beta and gamma) and ACTH. The activity of this receptor is mediated by G proteins which activate adenylate cyclase. Mediates melanogenesis, the production of eumelanin (black/brown) and phaeomelanin (red/yellow), via regulation of cAMP signaling in melanocytes. This Saguinus geoffroyi (Geoffroy's tamarin) protein is Melanocyte-stimulating hormone receptor (MC1R).